A 515-amino-acid polypeptide reads, in one-letter code: N-acetylglucosamine-1-phosphodiester alpha-N-acetylglucosaminidase (515 aa).

The N-terminal stretch at 1–25 is a signal peptide; sequence MATSTGRWLLLRLALFGFLWEASGG. Residues 26-49 constitute a propeptide, removed in mature form; the sequence is LDSGASRDDDLLLPYPRARARLPR. Over 50–448 the chain is Lumenal; that stretch reads DCTRVRAGNR…AGELSFFTRT (399 aa). 5 disulfides stabilise this stretch: Cys-115–Cys-148, Cys-132–Cys-323, Cys-307–Cys-314, Cys-362–Cys-373, and Cys-380–Cys-389. N-linked (GlcNAc...) asparagine glycans are attached at residues Asn-208, Asn-214, and Asn-296. The region spanning 358-390 is the EGF-like domain; that stretch reads DELDCGPSNCSQHGLCTETGCRCDAGWTGSNCS. N-linked (GlcNAc...) asparagine glycosylation is found at Asn-366, Asn-388, and Asn-420. A helical transmembrane segment spans residues 449-469; that stretch reads AWLALTLALAFLLLISTAANL. Topologically, residues 470–515 are cytoplasmic; the sequence is SLLLSRAERNRRLHGDYAYHPLQEMNGEPLAAEKEQPGGAHNPFKD. Residues 486–493 are mediates the interaction with AP4M1; it reads YAYHPLQE. Residues 488–491 carry the Tyrosine-based internalization motif motif; sequence YHPL. The NPF internalization motif signature appears at 511-515; sequence NPFKD.

Homotetramer arranged as two disulfide-linked homodimers. Interacts with AP4M1. The precursor is cleaved and activated in the trans-Golgi network by a furin endopeptidase. In terms of tissue distribution, isoform 2 may be brain-specific.

Its subcellular location is the golgi apparatus. The protein localises to the golgi stack membrane. It localises to the trans-Golgi network. The enzyme catalyses N(4)-[6-(N-acetyl-alpha-D-glucosaminyl-1-phospho)-alpha-D-mannosyl-(1-&gt;2)-alpha-D-mannosyl-(glycan)]-L-asparaginyl-[protein] + H2O = N(4)-[6-phospho-alpha-D-mannosyl-(1-&gt;2)-alpha-D-mannosyl-(glycan)]-L-asparaginyl-[protein] + N-acetyl-D-glucosamine + H(+). The protein operates within protein modification; protein glycosylation. Its function is as follows. Catalyzes the second step in the formation of the mannose 6-phosphate targeting signal on lysosomal enzyme oligosaccharides by removing GlcNAc residues from GlcNAc-alpha-P-mannose moieties, which are formed in the first step. Also hydrolyzes UDP-GlcNAc, a sugar donor for Golgi N-acetylglucosaminyltransferases. This chain is N-acetylglucosamine-1-phosphodiester alpha-N-acetylglucosaminidase (NAGPA), found in Homo sapiens (Human).